Consider the following 184-residue polypeptide: MKISCVLGKLLMLFELIHGLQDLSITCSESWLQVKLRRTPLLNDLQPLQNELSLGIGCPVNMVEVDFFGFLYLLTFCGIRVSEHGVGILIESLIVYEPTNFDFNLHIPVSCYVQRRFPIILVMRGRENDSRRECRRSVGQHRSLSHELEDLEIRPRVSYVNSVPLLSYLIVSLPKCKNKAVHSG.

Positions 1 to 19 (MKISCVLGKLLMLFELIHG) are cleaved as a signal peptide. A glycan (N-linked (GlcNAc...) asparagine) is linked at Asn128.

This sequence belongs to the PLAC1 family.

The protein localises to the secreted. This is Oocyte-secreted protein 4A from Homo sapiens (Human).